Consider the following 120-residue polypeptide: Peptidyl-tRNA hydrolase (120 aa).

The protein belongs to the PTH2 family.

The protein resides in the cytoplasm. The enzyme catalyses an N-acyl-L-alpha-aminoacyl-tRNA + H2O = an N-acyl-L-amino acid + a tRNA + H(+). In terms of biological role, the natural substrate for this enzyme may be peptidyl-tRNAs which drop off the ribosome during protein synthesis. The chain is Peptidyl-tRNA hydrolase from Sulfolobus acidocaldarius (strain ATCC 33909 / DSM 639 / JCM 8929 / NBRC 15157 / NCIMB 11770).